A 169-amino-acid chain; its full sequence is Cell division protein B3 (169 aa).

Part of a cell division machinery. May fulfill a coordination function between the Cdv proteins during cell division. This is Cell division protein B3 from Sulfolobus acidocaldarius (strain ATCC 33909 / DSM 639 / JCM 8929 / NBRC 15157 / NCIMB 11770).